We begin with the raw amino-acid sequence, 344 residues long: Inositol 2-dehydrogenase/D-chiro-inositol 3-dehydrogenase (344 aa).

It belongs to the Gfo/Idh/MocA family. As to quaternary structure, homotetramer.

The catalysed reaction is myo-inositol + NAD(+) = scyllo-inosose + NADH + H(+). It carries out the reaction 1D-chiro-inositol + NAD(+) = scyllo-inosine + NADH + H(+). It functions in the pathway polyol metabolism; myo-inositol degradation into acetyl-CoA; acetyl-CoA from myo-inositol: step 1/7. In terms of biological role, involved in the oxidation of myo-inositol (MI) and D-chiro-inositol (DCI) to 2-keto-myo-inositol (2KMI or 2-inosose) and 1-keto-D-chiro-inositol (1KDCI), respectively. Can also use D-glucose and D-xylose, and shows a trace of activity with D-ribose and D-fructose. This chain is Inositol 2-dehydrogenase/D-chiro-inositol 3-dehydrogenase (iolG), found in Bacillus subtilis (strain 168).